Reading from the N-terminus, the 694-residue chain is Glycine--tRNA ligase beta subunit (694 aa).

It belongs to the class-II aminoacyl-tRNA synthetase family. As to quaternary structure, tetramer of two alpha and two beta subunits.

The protein resides in the cytoplasm. The enzyme catalyses tRNA(Gly) + glycine + ATP = glycyl-tRNA(Gly) + AMP + diphosphate. The chain is Glycine--tRNA ligase beta subunit from Shewanella denitrificans (strain OS217 / ATCC BAA-1090 / DSM 15013).